The sequence spans 218 residues: Probable transaldolase (218 aa).

Residue K87 is the Schiff-base intermediate with substrate of the active site.

This sequence belongs to the transaldolase family. Type 3B subfamily.

The protein localises to the cytoplasm. The enzyme catalyses D-sedoheptulose 7-phosphate + D-glyceraldehyde 3-phosphate = D-erythrose 4-phosphate + beta-D-fructose 6-phosphate. It functions in the pathway carbohydrate degradation; pentose phosphate pathway; D-glyceraldehyde 3-phosphate and beta-D-fructose 6-phosphate from D-ribose 5-phosphate and D-xylulose 5-phosphate (non-oxidative stage): step 2/3. In terms of biological role, transaldolase is important for the balance of metabolites in the pentose-phosphate pathway. This chain is Probable transaldolase, found in Flavobacterium psychrophilum (strain ATCC 49511 / DSM 21280 / CIP 103535 / JIP02/86).